Reading from the N-terminus, the 20-residue chain is Hemocyanin subunit Ia (20 aa).

The interval 1–20 (ADXQPGDSTDKLLAQKQDDV) is disordered.

Belongs to the tyrosinase family. Hemocyanin subfamily. As to quaternary structure, composed of 3 major subunits (IB, II and III) and 1 minor subunit (IA) which form homohexamers and heterohexamers. May also form larger structures. In terms of tissue distribution, hemolymph.

The protein localises to the secreted. It is found in the extracellular space. Its function is as follows. Hemocyanins are copper-containing oxygen carriers occurring freely dissolved in the hemolymph of many mollusks and arthropods. This is Hemocyanin subunit Ia from Panulirus japonicus (Japanese spiny lobster).